Here is a 193-residue protein sequence, read N- to C-terminus: Peptidyl-tRNA hydrolase (193 aa).

Y15 serves as a coordination point for tRNA. H20 functions as the Proton acceptor in the catalytic mechanism. F65, N67, and N113 together coordinate tRNA.

This sequence belongs to the PTH family. As to quaternary structure, monomer.

It is found in the cytoplasm. It catalyses the reaction an N-acyl-L-alpha-aminoacyl-tRNA + H2O = an N-acyl-L-amino acid + a tRNA + H(+). Functionally, hydrolyzes ribosome-free peptidyl-tRNAs (with 1 or more amino acids incorporated), which drop off the ribosome during protein synthesis, or as a result of ribosome stalling. In terms of biological role, catalyzes the release of premature peptidyl moieties from peptidyl-tRNA molecules trapped in stalled 50S ribosomal subunits, and thus maintains levels of free tRNAs and 50S ribosomes. This Ehrlichia canis (strain Jake) protein is Peptidyl-tRNA hydrolase.